The sequence spans 185 residues: Ribosome-recycling factor (185 aa).

It belongs to the RRF family.

It is found in the cytoplasm. Its function is as follows. Responsible for the release of ribosomes from messenger RNA at the termination of protein biosynthesis. May increase the efficiency of translation by recycling ribosomes from one round of translation to another. This chain is Ribosome-recycling factor, found in Xylella fastidiosa (strain 9a5c).